The chain runs to 253 residues: Ribonuclease PH (253 aa).

Phosphate-binding positions include Arg86 and Gly124–Arg126.

This sequence belongs to the RNase PH family. In terms of assembly, homohexameric ring arranged as a trimer of dimers.

The enzyme catalyses tRNA(n+1) + phosphate = tRNA(n) + a ribonucleoside 5'-diphosphate. In terms of biological role, phosphorolytic 3'-5' exoribonuclease that plays an important role in tRNA 3'-end maturation. Removes nucleotide residues following the 3'-CCA terminus of tRNAs; can also add nucleotides to the ends of RNA molecules by using nucleoside diphosphates as substrates, but this may not be physiologically important. Probably plays a role in initiation of 16S rRNA degradation (leading to ribosome degradation) during starvation. This is Ribonuclease PH from Brevibacillus brevis (strain 47 / JCM 6285 / NBRC 100599).